The following is a 211-amino-acid chain: UPF0502 protein PC1_1804 (211 aa).

The segment at 168–188 is disordered; it reads SGDASDAAPEEEGAGDNSHQL.

Belongs to the UPF0502 family.

This chain is UPF0502 protein PC1_1804, found in Pectobacterium carotovorum subsp. carotovorum (strain PC1).